The sequence spans 102 residues: NADH-quinone oxidoreductase subunit K (102 aa).

3 helical membrane passes run 6–26 (LTGF…GVLA), 30–50 (ILFQ…AFIA), and 63–83 (MFVL…ALFL).

It belongs to the complex I subunit 4L family. NDH-1 is composed of 14 different subunits. Subunits NuoA, H, J, K, L, M, N constitute the membrane sector of the complex.

The protein localises to the cell inner membrane. It carries out the reaction a quinone + NADH + 5 H(+)(in) = a quinol + NAD(+) + 4 H(+)(out). Its function is as follows. NDH-1 shuttles electrons from NADH, via FMN and iron-sulfur (Fe-S) centers, to quinones in the respiratory chain. The immediate electron acceptor for the enzyme in this species is believed to be ubiquinone. Couples the redox reaction to proton translocation (for every two electrons transferred, four hydrogen ions are translocated across the cytoplasmic membrane), and thus conserves the redox energy in a proton gradient. The chain is NADH-quinone oxidoreductase subunit K from Rhodopseudomonas palustris (strain BisA53).